Consider the following 257-residue polypeptide: Ribosome-recycling factor, mitochondrial (257 aa).

The protein belongs to the RRF family.

It localises to the mitochondrion. Its function is as follows. Necessary for protein synthesis in mitochondria. Functions as a ribosome recycling factor in mitochondria. This is Ribosome-recycling factor, mitochondrial (RRF1) from Debaryomyces hansenii (strain ATCC 36239 / CBS 767 / BCRC 21394 / JCM 1990 / NBRC 0083 / IGC 2968) (Yeast).